The following is a 141-amino-acid chain: Nucleoside triphosphatase NudI (141 aa).

Positions 1–141 (MRQRTIVCPL…RHTLALKGLL (141 aa)) constitute a Nudix hydrolase domain. The Nudix box signature appears at 38–59 (GGVEPGERIEEALRREIREELG).

Belongs to the Nudix hydrolase family. NudI subfamily. As to quaternary structure, monomer. Mg(2+) serves as cofactor.

The enzyme catalyses a ribonucleoside 5'-triphosphate + H2O = a ribonucleoside 5'-phosphate + diphosphate + H(+). It carries out the reaction a 2'-deoxyribonucleoside 5'-triphosphate + H2O = a 2'-deoxyribonucleoside 5'-phosphate + diphosphate + H(+). The catalysed reaction is dUTP + H2O = dUMP + diphosphate + H(+). It catalyses the reaction dTTP + H2O = dTMP + diphosphate + H(+). The enzyme catalyses dCTP + H2O = dCMP + diphosphate + H(+). Functionally, catalyzes the hydrolysis of nucleoside triphosphates, with a preference for pyrimidine deoxynucleoside triphosphates (dUTP, dTTP and dCTP). The sequence is that of Nucleoside triphosphatase NudI from Salmonella newport (strain SL254).